The following is a 1902-amino-acid chain: PII-type proteinase (1902 aa).

The signal sequence occupies residues 1 to 33 (MQRKKKGLSILLAGTVALGALAVLPVGEIQAKA). Positions 34-187 (AISQQTKGSS…VTLAKVYYPT (154 aa)) are excised as a propeptide. Residues 191 to 697 (ANSMANVQAV…AGLVDVKAAI (507 aa)) enclose the Peptidase S8 domain. Catalysis depends on charge relay system residues D217, H281, and S620. Positions 1796-1874 (GKGDGTTGTS…GALPKTGETT (79 aa)) are disordered. The segment covering 1797 to 1812 (KGDGTTGTSDKGGGQG) has biased composition (gly residues). Positions 1830 to 1843 (SQPSSGGNIPTNPA) are enriched in polar residues. An LPXTG sorting signal motif is present at residues 1867–1871 (LPKTG). T1870 is modified (pentaglycyl murein peptidoglycan amidated threonine). The propeptide at 1871–1902 (GETTERPAFGFLGVIVVSLMGVLGLKRKQREE) is removed by sortase.

It belongs to the peptidase S8 family.

It localises to the secreted. It is found in the cell wall. It carries out the reaction Endopeptidase activity with very broad specificity, although some subsite preference have been noted, e.g. large hydrophobic residues in the P1 and P4 positions, and Pro in the P2 position. Best known for its action on caseins, although it has been shown to hydrolyze hemoglobin and oxidized insulin B-chain.. In terms of biological role, protease which breaks down milk proteins during the growth of the bacteria on milk. The sequence is that of PII-type proteinase (prt) from Lactococcus lactis subsp. cremoris (Streptococcus cremoris).